A 454-amino-acid polypeptide reads, in one-letter code: DNA repair protein RadA (454 aa).

The C4-type zinc-finger motif lies at 11–28; the sequence is CTECGTHSPKWLGQCSGC. 94–101 contacts ATP; sequence GEPGIGKS. The RadA KNRFG motif motif lies at 251-255; that stretch reads KNRFG. Residues 350–454 are lon-protease-like; the sequence is DVFLSIAGGL…TIKDAVRLLQ (105 aa).

Belongs to the RecA family. RadA subfamily.

In terms of biological role, DNA-dependent ATPase involved in processing of recombination intermediates, plays a role in repairing DNA breaks. Stimulates the branch migration of RecA-mediated strand transfer reactions, allowing the 3' invading strand to extend heteroduplex DNA faster. Binds ssDNA in the presence of ADP but not other nucleotides, has ATPase activity that is stimulated by ssDNA and various branched DNA structures, but inhibited by SSB. Does not have RecA's homology-searching function. In Chlamydia trachomatis serovar D (strain ATCC VR-885 / DSM 19411 / UW-3/Cx), this protein is DNA repair protein RadA.